Consider the following 536-residue polypeptide: Formate--tetrahydrofolate ligase (536 aa).

Position 51-58 (51-58 (TPAGEGKT)) interacts with ATP.

Belongs to the formate--tetrahydrofolate ligase family.

It carries out the reaction (6S)-5,6,7,8-tetrahydrofolate + formate + ATP = (6R)-10-formyltetrahydrofolate + ADP + phosphate. The protein operates within one-carbon metabolism; tetrahydrofolate interconversion. The polypeptide is Formate--tetrahydrofolate ligase (Thermoplasma acidophilum (strain ATCC 25905 / DSM 1728 / JCM 9062 / NBRC 15155 / AMRC-C165)).